The primary structure comprises 430 residues: MIKLRDELGTATTDSAQKILLLGSGELGKEIAIEAQRLGVEVVAVDRYANAPAMQVAHRSYVGNMMDKDFLWSVVEREKPDAIIPEIEAINLDALFEFEKDGYFVVPNARATWIAMHRERLRETLVKEAKVPTSRYMYATTLDELYEACEKIGYPCHTKAIMSSSGKGSYFVKGPEDIPKAWEEAKTKARGSAEKIIVEEHIDFDVEVTELAVRHFDENGEIVTTFPKPVGHYQIDGDYHASWQPAEISEKAEREVYRIAKRITDVLGGLGIFGVEMFVKGDKVWANEVSPRPHDTGMVTLASHPPGFSEFALHLRAVLGLPIPGEWVDGYRLFPMLIPAATHVIKAKVSGYSPRFRGLVKALSVPNATVRLFGKPEAYVGRRLGIALAWDKDVEVAKRKAEMVAHMIELRTRSSDWHDQNYEKRKHLLR.

Residues 26–27 (EL) and E86 contribute to the N(1)-(5-phospho-beta-D-ribosyl)glycinamide site. ATP-binding positions include R118, K159, 199-202 (EEHI), and E207. Residues 123–319 (ETLVKEAKVP…EFALHLRAVL (197 aa)) enclose the ATP-grasp domain. The Mg(2+) site is built by E276 and E288. Residues D295, K375, and 382-383 (RR) each bind N(1)-(5-phospho-beta-D-ribosyl)glycinamide.

The protein belongs to the PurK/PurT family. As to quaternary structure, homodimer.

It catalyses the reaction N(1)-(5-phospho-beta-D-ribosyl)glycinamide + formate + ATP = N(2)-formyl-N(1)-(5-phospho-beta-D-ribosyl)glycinamide + ADP + phosphate + H(+). Its pathway is purine metabolism; IMP biosynthesis via de novo pathway; N(2)-formyl-N(1)-(5-phospho-D-ribosyl)glycinamide from N(1)-(5-phospho-D-ribosyl)glycinamide (formate route): step 1/1. Involved in the de novo purine biosynthesis. Catalyzes the transfer of formate to 5-phospho-ribosyl-glycinamide (GAR), producing 5-phospho-ribosyl-N-formylglycinamide (FGAR). Formate is provided by PurU via hydrolysis of 10-formyl-tetrahydrofolate. The polypeptide is Formate-dependent phosphoribosylglycinamide formyltransferase (Pyrococcus horikoshii (strain ATCC 700860 / DSM 12428 / JCM 9974 / NBRC 100139 / OT-3)).